The chain runs to 503 residues: AMP phosphorylase (503 aa).

AMP contacts are provided by residues Gly168, 194–199 (SRAITS), and Thr203. The active-site Proton donor is the Asp256. The AMP site is built by Ser264 and Lys288.

It belongs to the thymidine/pyrimidine-nucleoside phosphorylase family. Type 2 subfamily.

It catalyses the reaction AMP + phosphate = alpha-D-ribose 1,5-bisphosphate + adenine. The catalysed reaction is CMP + phosphate = cytosine + alpha-D-ribose 1,5-bisphosphate. The enzyme catalyses UMP + phosphate = alpha-D-ribose 1,5-bisphosphate + uracil. In terms of biological role, catalyzes the conversion of AMP and phosphate to adenine and ribose 1,5-bisphosphate (R15P). Exhibits phosphorylase activity toward CMP and UMP in addition to AMP. Functions in an archaeal AMP degradation pathway, together with R15P isomerase and RubisCO. This Methanocaldococcus jannaschii (strain ATCC 43067 / DSM 2661 / JAL-1 / JCM 10045 / NBRC 100440) (Methanococcus jannaschii) protein is AMP phosphorylase.